A 235-amino-acid polypeptide reads, in one-letter code: Elongation factor Tu, chloroplastic (235 aa).

Residues 1-125 (KNMITGAAQM…SVDSYIPTPI (125 aa)) enclose the tr-type G domain. A GTP-binding site is contributed by 47–50 (NKED).

It belongs to the TRAFAC class translation factor GTPase superfamily. Classic translation factor GTPase family. EF-Tu/EF-1A subfamily.

It is found in the plastid. Its subcellular location is the chloroplast. It carries out the reaction GTP + H2O = GDP + phosphate + H(+). Functionally, GTP hydrolase that promotes the GTP-dependent binding of aminoacyl-tRNA to the A-site of ribosomes during protein biosynthesis. The polypeptide is Elongation factor Tu, chloroplastic (tufA) (Costaria costata (Five-ribbed kelp)).